We begin with the raw amino-acid sequence, 374 residues long: 8-amino-7-oxononanoate synthase (374 aa).

Residues R22 and R29 each coordinate substrate. 109–110 contributes to the pyridoxal 5'-phosphate binding site; that stretch reads GY. Residue H134 participates in substrate binding. Residues S182, 207-210, and 227-230 each bind pyridoxal 5'-phosphate; these read DDAH and TLSK. K230 is modified (N6-(pyridoxal phosphate)lysine). T339 serves as a coordination point for substrate.

It belongs to the class-II pyridoxal-phosphate-dependent aminotransferase family. BioF subfamily. Homodimer. Requires pyridoxal 5'-phosphate as cofactor.

The catalysed reaction is 6-carboxyhexanoyl-[ACP] + L-alanine + H(+) = (8S)-8-amino-7-oxononanoate + holo-[ACP] + CO2. It functions in the pathway cofactor biosynthesis; biotin biosynthesis. In terms of biological role, catalyzes the decarboxylative condensation of pimeloyl-[acyl-carrier protein] and L-alanine to produce 8-amino-7-oxononanoate (AON), [acyl-carrier protein], and carbon dioxide. The sequence is that of 8-amino-7-oxononanoate synthase from Methylobacterium radiotolerans (strain ATCC 27329 / DSM 1819 / JCM 2831 / NBRC 15690 / NCIMB 10815 / 0-1).